The following is a 667-amino-acid chain: DNA ligase (667 aa).

NAD(+)-binding positions include 32–36, 81–82, and glutamate 110; these read DSEYD and SL. Lysine 112 acts as the N6-AMP-lysine intermediate in catalysis. The NAD(+) site is built by arginine 133, glutamate 167, lysine 283, and lysine 307. Zn(2+)-binding residues include cysteine 401, cysteine 404, cysteine 419, and cysteine 424. Positions 586 to 667 constitute a BRCT domain; the sequence is EGHPEFSGKT…FVDKQNELNS (82 aa).

This sequence belongs to the NAD-dependent DNA ligase family. LigA subfamily. Requires Mg(2+) as cofactor. Mn(2+) serves as cofactor.

The enzyme catalyses NAD(+) + (deoxyribonucleotide)n-3'-hydroxyl + 5'-phospho-(deoxyribonucleotide)m = (deoxyribonucleotide)n+m + AMP + beta-nicotinamide D-nucleotide.. Its function is as follows. DNA ligase that catalyzes the formation of phosphodiester linkages between 5'-phosphoryl and 3'-hydroxyl groups in double-stranded DNA using NAD as a coenzyme and as the energy source for the reaction. It is essential for DNA replication and repair of damaged DNA. This Staphylococcus aureus (strain COL) protein is DNA ligase.